Here is a 1057-residue protein sequence, read N- to C-terminus: Carbamoyl phosphate synthase large chain (1057 aa).

A carboxyphosphate synthetic domain region spans residues methionine 1–glutamate 401. Residues arginine 129, arginine 169, glycine 175, glycine 176, lysine 208, isoleucine 210, glutamate 215, glycine 241, isoleucine 242, histidine 243, glutamine 284, and glutamate 298 each coordinate ATP. The ATP-grasp 1 domain maps to arginine 133–valine 327. Glutamine 284, glutamate 298, and asparagine 300 together coordinate Mg(2+). Residues glutamine 284, glutamate 298, and asparagine 300 each coordinate Mn(2+). The segment at tyrosine 402–serine 546 is oligomerization domain. The interval isoleucine 547–glycine 929 is carbamoyl phosphate synthetic domain. The ATP-grasp 2 domain maps to glutamate 671–isoleucine 861. Residues arginine 707, arginine 746, leucine 748, glutamate 752, glycine 777, valine 778, histidine 779, serine 780, glutamine 820, and glutamate 832 each contribute to the ATP site. Residues glutamine 820, glutamate 832, and asparagine 834 each contribute to the Mg(2+) site. Mn(2+)-binding residues include glutamine 820, glutamate 832, and asparagine 834. In terms of domain architecture, MGS-like spans valine 930–methionine 1057. Residues valine 930–methionine 1057 are allosteric domain.

It belongs to the CarB family. Composed of two chains; the small (or glutamine) chain promotes the hydrolysis of glutamine to ammonia, which is used by the large (or ammonia) chain to synthesize carbamoyl phosphate. Tetramer of heterodimers (alpha,beta)4. The cofactor is Mg(2+). Mn(2+) is required as a cofactor.

The catalysed reaction is hydrogencarbonate + L-glutamine + 2 ATP + H2O = carbamoyl phosphate + L-glutamate + 2 ADP + phosphate + 2 H(+). The enzyme catalyses hydrogencarbonate + NH4(+) + 2 ATP = carbamoyl phosphate + 2 ADP + phosphate + 2 H(+). It functions in the pathway amino-acid biosynthesis; L-arginine biosynthesis; carbamoyl phosphate from bicarbonate: step 1/1. It participates in pyrimidine metabolism; UMP biosynthesis via de novo pathway; (S)-dihydroorotate from bicarbonate: step 1/3. In terms of biological role, large subunit of the glutamine-dependent carbamoyl phosphate synthetase (CPSase). CPSase catalyzes the formation of carbamoyl phosphate from the ammonia moiety of glutamine, carbonate, and phosphate donated by ATP, constituting the first step of 2 biosynthetic pathways, one leading to arginine and/or urea and the other to pyrimidine nucleotides. The large subunit (synthetase) binds the substrates ammonia (free or transferred from glutamine from the small subunit), hydrogencarbonate and ATP and carries out an ATP-coupled ligase reaction, activating hydrogencarbonate by forming carboxy phosphate which reacts with ammonia to form carbamoyl phosphate. The chain is Carbamoyl phosphate synthase large chain from Staphylococcus aureus (strain bovine RF122 / ET3-1).